Reading from the N-terminus, the 61-residue chain is Sperm protamine P1 (61 aa).

Residues 1 to 61 (MARYRHSRSR…RRYHSHRRRY (61 aa)) are disordered.

This sequence belongs to the protamine P1 family. Testis.

It localises to the nucleus. Its subcellular location is the chromosome. In terms of biological role, protamines substitute for histones in the chromatin of sperm during the haploid phase of spermatogenesis. They compact sperm DNA into a highly condensed, stable and inactive complex. The polypeptide is Sperm protamine P1 (PRM1) (Notoryctes typhlops (Southern marsupial mole)).